The primary structure comprises 233 residues: Ciliary microtubule inner protein 6 (233 aa).

Composition is skewed to basic and acidic residues over residues 1-14 (MEGEEKQQQHKTED) and 21-33 (AERKVEIKNEKSP). A disordered region spans residues 1 to 45 (MEGEEKQQQHKTEDDGIACVAERKVEIKNEKSPGKSTQHPKPCVD). Positions 127–159 (GIVPLTSLDVSGEHENNFVEYISFIHQYDARRT) are mn. The disordered stretch occupies residues 192–233 (LLNTLESGSSEQPQKTDKGNSSGDKVTSPGLCQQNSQELLET). Residues 195–233 (TLESGSSEQPQKTDKGNSSGDKVTSPGLCQQNSQELLET) show a composition bias toward polar residues.

Its subcellular location is the cell projection. The protein localises to the cilium. This chain is Ciliary microtubule inner protein 6 (Cimip6), found in Mus musculus (Mouse).